The following is a 128-amino-acid chain: Large ribosomal subunit protein bL20c (128 aa).

The protein belongs to the bacterial ribosomal protein bL20 family.

It localises to the plastid. Its subcellular location is the chloroplast. Binds directly to 23S ribosomal RNA and is necessary for the in vitro assembly process of the 50S ribosomal subunit. It is not involved in the protein synthesizing functions of that subunit. This is Large ribosomal subunit protein bL20c from Daucus carota (Wild carrot).